The sequence spans 812 residues: cAMP-regulated phosphoprotein 21 (812 aa).

Residues 1–130 (MSEQGDLNQA…KDKTSEKPKI (130 aa)) form a disordered region. Position 2 is an N-acetylserine (Ser-2). Residues 9 to 25 (QAIAEEGGTEQETATPE) show a composition bias toward low complexity. Residues 32–58 (ESLDEEEKLELQRRLEAQNQERRKSKS) adopt a coiled-coil conformation. Ser-33 is modified (phosphoserine). The segment covering 40 to 53 (LELQRRLEAQNQER) has biased composition (basic and acidic residues). Ser-56 bears the Phosphoserine mark. Low complexity predominate over residues 90 to 100 (IHLQLSSFSSL). The segment covering 102 to 130 (EEDKSRKDDSEREKEKDKNKDKTSEKPKI) has biased composition (basic and acidic residues). The residue at position 134 (Ser-134) is a Phosphoserine. Residues 164–227 (RMILLKMEQE…SVIINKTSST (64 aa)) enclose the R3H domain. The SUZ domain occupies 228–300 (RIPEQRFCEH…VRERIFAHDS (73 aa)). The segment at 246–281 (SQKRFILKRDNSSIDKEDNQQNRMHPFRDDRRSKSI) is disordered. A Phosphoserine modification is found at Ser-300. Disordered stretches follow at residues 332 to 436 (RGNR…PLVS), 485 to 544 (HTGQ…MAGP), and 561 to 632 (LSRQ…QQPP). Over residues 339-349 (GRTSGSRQSSS) the composition is skewed to low complexity. The segment covering 351-360 (NELKWSDHQR) has biased composition (basic and acidic residues). Residues 361–373 (AWSSTDSDSSNRN) show a composition bias toward polar residues. 2 positions are modified to phosphoserine: Ser-363 and Ser-383. A compositionally biased stretch (low complexity) spans 391–423 (TRGDSTSSTRSTGKLSKAGSESSSSAGSSGSLS). The residue at position 562 (Ser-562) is a Phosphoserine. A compositionally biased stretch (polar residues) spans 582-602 (LMPQPAQQPSYVIASTGQQLP). A compositionally biased stretch (pro residues) spans 619–632 (QPPPSPQGFVQQPP). Position 655 is an asymmetric dimethylarginine (Arg-655).

In terms of assembly, interacts with CALM1. In terms of processing, phosphorylation at Ser-56 favors interaction with CALM1. Isoform 1 is methylated by CARM1 at Arg-655 in immature thymocytes. In terms of tissue distribution, isoform 2 is expressed in brain. Isoform 1 is present in immature thymocytes (at protein level).

It localises to the cytoplasm. Functionally, isoform 2 may act as a competitive inhibitor of calmodulin-dependent enzymes such as calcineurin in neurons. The chain is cAMP-regulated phosphoprotein 21 (ARPP21) from Homo sapiens (Human).